A 134-amino-acid chain; its full sequence is Fatty acid-binding protein 5 (134 aa).

The Nuclear localization signal motif lies at 23 to 33 (KELGVGMAMRK). Residues Arg109 and 129–131 (RVY) contribute to the hexadecanoate site. Positions 109 and 131 each coordinate N-eicosanoyl ethanolamine. Position 129-131 (129-131 (RVY)) interacts with (9Z,12Z)-octadecadienoate.

The protein belongs to the calycin superfamily. Fatty-acid binding protein (FABP) family. In terms of assembly, monomer.

The protein localises to the cytoplasm. The protein resides in the nucleus. It localises to the synapse. It is found in the postsynaptic density. Its subcellular location is the secreted. It catalyses the reaction hexadecanoate(out) = hexadecanoate(in). It carries out the reaction (9Z,12Z)-octadecadienoate(out) = (9Z,12Z)-octadecadienoate(in). The catalysed reaction is (9Z)-octadecenoate(out) = (9Z)-octadecenoate(in). Functionally, intracellular carrier for long-chain fatty acids and related active lipids, such as endocannabinoids, that regulate the metabolism and actions of the ligands they bind. In addition to the cytosolic transport, selectively delivers specific fatty acids from the cytosol to the nucleus, wherein they activate nuclear receptors. Delivers retinoic acid to the nuclear receptor peroxisome proliferator-activated receptor delta; which promotes proliferation and survival. May also serve as a synaptic carrier of endocannabinoid at central synapses and thus controls retrograde endocannabinoid signaling. Modulates inflammation by regulating PTGES induction via NF-kappa-B activation, and prostaglandin E2 (PGE2) biosynthesis during inflammation. Has the highest binding affinity for docosahexaenoic acid (DHA) and decreasing relative affinity for eicosapentaenoic acid (EPA), alpha-linolenic acid (ALA), oleic acid, palmitic acid, linoleic acid and stearic acid, respectively. The sequence is that of Fatty acid-binding protein 5 from Pygoscelis papua (Gentoo penguin).